The following is a 235-amino-acid chain: Segregation and condensation protein A (235 aa).

This sequence belongs to the ScpA family. Component of a cohesin-like complex composed of ScpA, ScpB and the Smc homodimer, in which ScpA and ScpB bind to the head domain of Smc. The presence of the three proteins is required for the association of the complex with DNA.

It localises to the cytoplasm. Its function is as follows. Participates in chromosomal partition during cell division. May act via the formation of a condensin-like complex containing Smc and ScpB that pull DNA away from mid-cell into both cell halves. The chain is Segregation and condensation protein A from Streptococcus mutans serotype c (strain ATCC 700610 / UA159).